Reading from the N-terminus, the 1044-residue chain is Isoleucine--tRNA ligase (1044 aa).

The 'HIGH' region signature appears at 49-59 (PYCSGRIHLGT). Residues 591-595 (KMSKS) carry the 'KMSKS' region motif. An ATP-binding site is contributed by Lys-594.

This sequence belongs to the class-I aminoacyl-tRNA synthetase family. IleS type 2 subfamily. Monomer. It depends on Zn(2+) as a cofactor.

It is found in the cytoplasm. It carries out the reaction tRNA(Ile) + L-isoleucine + ATP = L-isoleucyl-tRNA(Ile) + AMP + diphosphate. Catalyzes the attachment of isoleucine to tRNA(Ile). As IleRS can inadvertently accommodate and process structurally similar amino acids such as valine, to avoid such errors it has two additional distinct tRNA(Ile)-dependent editing activities. One activity is designated as 'pretransfer' editing and involves the hydrolysis of activated Val-AMP. The other activity is designated 'posttransfer' editing and involves deacylation of mischarged Val-tRNA(Ile). In Methanothermobacter thermautotrophicus (strain ATCC 29096 / DSM 1053 / JCM 10044 / NBRC 100330 / Delta H) (Methanobacterium thermoautotrophicum), this protein is Isoleucine--tRNA ligase.